A 231-amino-acid polypeptide reads, in one-letter code: Urease accessory protein UreF (231 aa).

It belongs to the UreF family. UreD, UreF and UreG form a complex that acts as a GTP-hydrolysis-dependent molecular chaperone, activating the urease apoprotein by helping to assemble the nickel containing metallocenter of UreC. The UreE protein probably delivers the nickel.

It is found in the cytoplasm. Functionally, required for maturation of urease via the functional incorporation of the urease nickel metallocenter. In Magnetococcus marinus (strain ATCC BAA-1437 / JCM 17883 / MC-1), this protein is Urease accessory protein UreF.